We begin with the raw amino-acid sequence, 536 residues long: Probable 1,4-beta-D-glucan cellobiohydrolase B (536 aa).

Positions 1–21 are cleaved as a signal peptide; the sequence is MSSFQVYRAALLLSILATANA. The tract at residues 22-458 is catalytic; that stretch reads QQVGTYTTET…SNIKFGPIGS (437 aa). Glutamate 233 functions as the Nucleophile in the catalytic mechanism. Glutamate 238 (proton donor) is an active-site residue. 2 N-linked (GlcNAc...) asparagine glycosylation sites follow: asparagine 351 and asparagine 414. A ser/Thr-rich linker region spans residues 459–500; sequence TYSSGSSSGSGSSSSSSSTTTKATSTTLKTTSTTSSGSSSTS. The disordered stretch occupies residues 464–499; that stretch reads SSSGSGSSSSSSSTTTKATSTTLKTTSTTSSGSSST. Residues 500–536 enclose the CBM1 domain; sequence SAAQAYGQCGGQGWTGPTTCVSGYTCTYENAYYSQCL. Cystine bridges form between cysteine 508/cysteine 525 and cysteine 519/cysteine 535.

The protein belongs to the glycosyl hydrolase 7 (cellulase C) family.

The protein resides in the secreted. The catalysed reaction is Hydrolysis of (1-&gt;4)-beta-D-glucosidic linkages in cellulose and cellotetraose, releasing cellobiose from the non-reducing ends of the chains.. In terms of biological role, the biological conversion of cellulose to glucose generally requires three types of hydrolytic enzymes: (1) Endoglucanases which cut internal beta-1,4-glucosidic bonds; (2) Exocellobiohydrolases that cut the disaccharide cellobiose from the non-reducing end of the cellulose polymer chain; (3) Beta-1,4-glucosidases which hydrolyze the cellobiose and other short cello-oligosaccharides to glucose. The chain is Probable 1,4-beta-D-glucan cellobiohydrolase B (cbhB) from Aspergillus niger (strain ATCC MYA-4892 / CBS 513.88 / FGSC A1513).